The following is a 201-amino-acid chain: Histidinol dehydrogenase (201 aa).

This sequence belongs to the histidinol dehydrogenase family. As to quaternary structure, homodimer. The cofactor is Zn(2+).

It carries out the reaction L-histidinol + 2 NAD(+) + H2O = L-histidine + 2 NADH + 3 H(+). Its pathway is amino-acid biosynthesis; L-histidine biosynthesis; L-histidine from 5-phospho-alpha-D-ribose 1-diphosphate: step 9/9. Its function is as follows. Catalyzes the sequential NAD-dependent oxidations of L-histidinol to L-histidinaldehyde and then to L-histidine. The polypeptide is Histidinol dehydrogenase (hisD) (Buchnera aphidicola subsp. Melaphis rhois).